The chain runs to 150 residues: Large ribosomal subunit protein bL9 (150 aa).

This sequence belongs to the bacterial ribosomal protein bL9 family.

Functionally, binds to the 23S rRNA. The polypeptide is Large ribosomal subunit protein bL9 (Arthrobacter sp. (strain FB24)).